Here is a 489-residue protein sequence, read N- to C-terminus: Para-nitrobenzyl esterase (489 aa).

Catalysis depends on Ser-189, which acts as the Acyl-ester intermediate. A Phosphoserine modification is found at Ser-189. Residues Glu-310 and His-399 each act as charge relay system in the active site.

Belongs to the type-B carboxylesterase/lipase family. As to quaternary structure, monomer.

Its function is as follows. Catalyzes hydrolysis of several beta-lactam antibiotic PNB esters to the corresponding free acid and PNB alcohol. The protein is Para-nitrobenzyl esterase (pnbA) of Bacillus subtilis (strain 168).